Reading from the N-terminus, the 339-residue chain is tRNA N6-adenosine threonylcarbamoyltransferase (339 aa).

Residues histidine 107 and histidine 111 each coordinate Fe cation. Residues leucine 129 to glycine 133, aspartate 162, glycine 175, and asparagine 279 contribute to the substrate site. Aspartate 307 serves as a coordination point for Fe cation.

Belongs to the KAE1 / TsaD family. The cofactor is Fe(2+).

The protein resides in the cytoplasm. It catalyses the reaction L-threonylcarbamoyladenylate + adenosine(37) in tRNA = N(6)-L-threonylcarbamoyladenosine(37) in tRNA + AMP + H(+). Its function is as follows. Required for the formation of a threonylcarbamoyl group on adenosine at position 37 (t(6)A37) in tRNAs that read codons beginning with adenine. Is involved in the transfer of the threonylcarbamoyl moiety of threonylcarbamoyl-AMP (TC-AMP) to the N6 group of A37, together with TsaE and TsaB. TsaD likely plays a direct catalytic role in this reaction. The polypeptide is tRNA N6-adenosine threonylcarbamoyltransferase (Campylobacter curvus (strain 525.92)).